A 203-amino-acid polypeptide reads, in one-letter code: dITP/XTP pyrophosphatase (203 aa).

8-13 (SNNAGK) lines the substrate pocket. 2 residues coordinate Mg(2+): aspartate 40 and aspartate 69. Aspartate 69 (proton acceptor) is an active-site residue. Substrate is bound by residues serine 70, 152-155 (FGYD), lysine 175, and 180-181 (HR).

This sequence belongs to the HAM1 NTPase family. As to quaternary structure, homodimer. It depends on Mg(2+) as a cofactor.

It carries out the reaction XTP + H2O = XMP + diphosphate + H(+). The catalysed reaction is dITP + H2O = dIMP + diphosphate + H(+). The enzyme catalyses ITP + H2O = IMP + diphosphate + H(+). In terms of biological role, pyrophosphatase that catalyzes the hydrolysis of nucleoside triphosphates to their monophosphate derivatives, with a high preference for the non-canonical purine nucleotides XTP (xanthosine triphosphate), dITP (deoxyinosine triphosphate) and ITP. Seems to function as a house-cleaning enzyme that removes non-canonical purine nucleotides from the nucleotide pool, thus preventing their incorporation into DNA/RNA and avoiding chromosomal lesions. This Nitrosomonas europaea (strain ATCC 19718 / CIP 103999 / KCTC 2705 / NBRC 14298) protein is dITP/XTP pyrophosphatase.